The sequence spans 349 residues: 3-isopropylmalate dehydrogenase (349 aa).

R91, R101, R129, and D219 together coordinate substrate. The Mg(2+) site is built by D219, D243, and D247. Position 277–289 (277–289 (GSAPDIAGLGKAN)) interacts with NAD(+).

Belongs to the isocitrate and isopropylmalate dehydrogenases family. LeuB type 1 subfamily. As to quaternary structure, homodimer. Mg(2+) is required as a cofactor. Mn(2+) serves as cofactor.

The protein resides in the cytoplasm. It catalyses the reaction (2R,3S)-3-isopropylmalate + NAD(+) = 4-methyl-2-oxopentanoate + CO2 + NADH. The protein operates within amino-acid biosynthesis; L-leucine biosynthesis; L-leucine from 3-methyl-2-oxobutanoate: step 3/4. Catalyzes the oxidation of 3-carboxy-2-hydroxy-4-methylpentanoate (3-isopropylmalate) to 3-carboxy-4-methyl-2-oxopentanoate. The product decarboxylates to 4-methyl-2 oxopentanoate. The chain is 3-isopropylmalate dehydrogenase from Zymomonas mobilis subsp. mobilis (strain ATCC 31821 / ZM4 / CP4).